Reading from the N-terminus, the 425-residue chain is Pre-mRNA-splicing factor RBM22 (425 aa).

The C3H1-type zinc-finger motif lies at 159–186 (RNRPHICSFWVKGECKRGEECPYRHEKP). An RRM domain is found at 232–305 (TTLYIGGLGE…RRLNVKWGRS (74 aa)). Disordered regions lie at residues 304–331 (RSQAARGKGEKDGVTESGIRLEPVPGLP) and 384–425 (HTMD…HGGP). The span at 389-399 (MAPPVPPPMAL) shows a compositional bias: pro residues.

The protein belongs to the SLT11 family. As to quaternary structure, component of the pre-catalytic and catalytic spliceosome complexes. Component of the postcatalytic spliceosome P complex.

It localises to the nucleus. The protein localises to the cytoplasm. Functionally, required for pre-mRNA splicing as component of the activated spliceosome. Involved in the first step of pre-mRNA splicing. Binds directly to the internal stem-loop (ISL) domain of the U6 snRNA and to the pre-mRNA intron near the 5' splice site during the activation and catalytic phases of the spliceosome cycle. Required for normal early embryogenesis. The chain is Pre-mRNA-splicing factor RBM22 (rbm22) from Danio rerio (Zebrafish).